We begin with the raw amino-acid sequence, 436 residues long: Ribulose bisphosphate carboxylase large chain (436 aa).

Substrate contacts are provided by N104 and T154. Residue K156 is the Proton acceptor of the active site. Residue K158 coordinates substrate. 3 residues coordinate Mg(2+): K182, D184, and E185. At K182 the chain carries N6-carboxylysine. H275 (proton acceptor) is an active-site residue. 3 residues coordinate substrate: R276, H308, and S360.

The protein belongs to the RuBisCO large chain family. Type I subfamily. Heterohexadecamer of 8 large chains and 8 small chains; disulfide-linked. The disulfide link is formed within the large subunit homodimers. It depends on Mg(2+) as a cofactor. Post-translationally, the disulfide bond which can form in the large chain dimeric partners within the hexadecamer appears to be associated with oxidative stress and protein turnover.

It is found in the plastid. The protein localises to the chloroplast. The enzyme catalyses 2 (2R)-3-phosphoglycerate + 2 H(+) = D-ribulose 1,5-bisphosphate + CO2 + H2O. The catalysed reaction is D-ribulose 1,5-bisphosphate + O2 = 2-phosphoglycolate + (2R)-3-phosphoglycerate + 2 H(+). In terms of biological role, ruBisCO catalyzes two reactions: the carboxylation of D-ribulose 1,5-bisphosphate, the primary event in carbon dioxide fixation, as well as the oxidative fragmentation of the pentose substrate in the photorespiration process. Both reactions occur simultaneously and in competition at the same active site. The chain is Ribulose bisphosphate carboxylase large chain from Euglena anabaena (Euglenaria anabaena).